The sequence spans 272 residues: Bifunctional protein FolD (272 aa).

NADP(+) contacts are provided by residues 155–157 (GRS), Ser-182, and Ile-223.

The protein belongs to the tetrahydrofolate dehydrogenase/cyclohydrolase family. As to quaternary structure, homodimer.

It carries out the reaction (6R)-5,10-methylene-5,6,7,8-tetrahydrofolate + NADP(+) = (6R)-5,10-methenyltetrahydrofolate + NADPH. It catalyses the reaction (6R)-5,10-methenyltetrahydrofolate + H2O = (6R)-10-formyltetrahydrofolate + H(+). It functions in the pathway one-carbon metabolism; tetrahydrofolate interconversion. Catalyzes the oxidation of 5,10-methylenetetrahydrofolate to 5,10-methenyltetrahydrofolate and then the hydrolysis of 5,10-methenyltetrahydrofolate to 10-formyltetrahydrofolate. This Fervidobacterium nodosum (strain ATCC 35602 / DSM 5306 / Rt17-B1) protein is Bifunctional protein FolD.